We begin with the raw amino-acid sequence, 860 residues long: JmjC domain-containing histone demethylation protein 1 (860 aa).

3 disordered regions span residues 1–45, 117–212, and 408–440; these read MSEQ…EEGK, STSP…PKRK, and DVKE…GGEI. Residues 23–116 form a PHD-type zinc finger; it reads PEPCPLCRET…KWYCAPCLAR (94 aa). 2 stretches are compositionally biased toward basic and acidic residues: residues 183–192 and 408–433; these read IDMKSEREQQ and DVKE…HLTE. The region spanning 416–579 is the JmjC domain; sequence NDSREGSEIR…TQLRLRQIEI (164 aa). Thr-471 contacts substrate. Fe cation-binding residues include His-474 and Asp-476. Lys-491 provides a ligand contact to substrate. His-547 contacts Fe cation. 2 disordered regions span residues 744–795 and 837–860; these read HPPA…ANEN and GPKL…DIDH. The segment covering 750-763 has biased composition (polar residues); that stretch reads ENRQSPQIETTTVQ. Low complexity predominate over residues 767 to 795; sequence PSTSSSDAISGSGPGASPGASANGGANEN.

It belongs to the JHDM1 histone demethylase family. It depends on Fe(2+) as a cofactor.

The protein resides in the nucleus. It carries out the reaction N(6),N(6)-dimethyl-L-lysyl(36)-[histone H3] + 2 2-oxoglutarate + 2 O2 = L-lysyl(36)-[histone H3] + 2 formaldehyde + 2 succinate + 2 CO2. Its function is as follows. Histone demethylase that specifically demethylates 'Lys-36' of histone H3, thereby playing a central role in histone code. The polypeptide is JmjC domain-containing histone demethylation protein 1 (JHD1) (Cryptococcus neoformans var. neoformans serotype D (strain JEC21 / ATCC MYA-565) (Filobasidiella neoformans)).